We begin with the raw amino-acid sequence, 261 residues long: Phosphoadenosine phosphosulfate reductase (261 aa).

Belongs to the PAPS reductase family. CysH subfamily.

The catalysed reaction is [thioredoxin]-disulfide + sulfite + adenosine 3',5'-bisphosphate + 2 H(+) = [thioredoxin]-dithiol + 3'-phosphoadenylyl sulfate. The protein operates within sulfur metabolism; hydrogen sulfide biosynthesis; sulfite from sulfate: step 3/3. Functionally, the NADP dependent reduction of PAPS into sulfite involves thioredoxin which probably plays the role of a thiol carrier. The protein is Phosphoadenosine phosphosulfate reductase (MET16) of Saccharomyces cerevisiae (strain ATCC 204508 / S288c) (Baker's yeast).